Here is a 484-residue protein sequence, read N- to C-terminus: Probable glycine dehydrogenase (decarboxylating) subunit 2 (484 aa).

K270 is modified (N6-(pyridoxal phosphate)lysine).

This sequence belongs to the GcvP family. C-terminal subunit subfamily. The glycine cleavage system is composed of four proteins: P, T, L and H. In this organism, the P 'protein' is a heterodimer of two subunits. Requires pyridoxal 5'-phosphate as cofactor.

The enzyme catalyses N(6)-[(R)-lipoyl]-L-lysyl-[glycine-cleavage complex H protein] + glycine + H(+) = N(6)-[(R)-S(8)-aminomethyldihydrolipoyl]-L-lysyl-[glycine-cleavage complex H protein] + CO2. Functionally, the glycine cleavage system catalyzes the degradation of glycine. The P protein binds the alpha-amino group of glycine through its pyridoxal phosphate cofactor; CO(2) is released and the remaining methylamine moiety is then transferred to the lipoamide cofactor of the H protein. This chain is Probable glycine dehydrogenase (decarboxylating) subunit 2, found in Desulforamulus reducens (strain ATCC BAA-1160 / DSM 100696 / MI-1) (Desulfotomaculum reducens).